Consider the following 97-residue polypeptide: Putative pterin-4-alpha-carbinolamine dehydratase (97 aa).

This sequence belongs to the pterin-4-alpha-carbinolamine dehydratase family.

The enzyme catalyses (4aS,6R)-4a-hydroxy-L-erythro-5,6,7,8-tetrahydrobiopterin = (6R)-L-erythro-6,7-dihydrobiopterin + H2O. This Cyanothece sp. (strain PCC 7425 / ATCC 29141) protein is Putative pterin-4-alpha-carbinolamine dehydratase.